The sequence spans 384 residues: Zinc finger CCCH domain-containing protein 12 (384 aa).

Disordered stretches follow at residues 1–32 (MSHH…NLGD) and 46–81 (WAMN…SAAS). Over residues 50-60 (PDNTSGDNNGP) the composition is skewed to polar residues. The span at 70–81 (SSSSATTTSAAS) shows a compositional bias: low complexity. 2 C3H1-type zinc fingers span residues 91–118 (FFKT…HTVE) and 172–200 (SFKG…HDEA). The disordered stretch occupies residues 211 to 231 (LGPGGYGSGGGGGSGGGSVGG). The span at 212–231 (GPGGYGSGGGGGSGGGSVGG) shows a compositional bias: gly residues. The C3H1-type 3 zinc-finger motif lies at 260-288 (NWKTRICNKWEITGYCPFGAKCHFAHGAA). A disordered region spans residues 299–335 (EEEGKDGVSPNPDTKQTVQNPKGLSDTTTLLSPGVPH). The segment covering 309–329 (NPDTKQTVQNPKGLSDTTTLL) has biased composition (polar residues).

In Arabidopsis thaliana (Mouse-ear cress), this protein is Zinc finger CCCH domain-containing protein 12.